An 86-amino-acid polypeptide reads, in one-letter code: Cytochrome c6 (86 aa).

Heme c is bound by residues Cys-14, Cys-17, His-18, and Met-58.

The protein belongs to the cytochrome c family. PetJ subfamily. In terms of assembly, monomer. Binds 1 heme c group covalently per subunit.

The protein localises to the plastid. It localises to the chloroplast thylakoid lumen. Its function is as follows. Functions as an electron carrier between membrane-bound cytochrome b6-f and photosystem I in oxygenic photosynthesis. The polypeptide is Cytochrome c6 (petJ) (Bumilleriopsis filiformis (Yellow-green alga)).